The sequence spans 95 residues: YcgL domain-containing protein Patl_2802 (95 aa).

Residues 4 to 88 (LLCAVYKSSK…PEENLLKQHL (85 aa)) enclose the YcgL domain.

This chain is YcgL domain-containing protein Patl_2802, found in Pseudoalteromonas atlantica (strain T6c / ATCC BAA-1087).